Here is a 208-residue protein sequence, read N- to C-terminus: V-type ATP synthase subunit D (208 aa).

The protein belongs to the V-ATPase D subunit family.

Produces ATP from ADP in the presence of a proton gradient across the membrane. In Chlamydia abortus (strain DSM 27085 / S26/3) (Chlamydophila abortus), this protein is V-type ATP synthase subunit D.